A 251-amino-acid polypeptide reads, in one-letter code: Flap endonuclease Xni (251 aa).

Mg(2+) is bound at residue Asp-104. One can recognise a 5'-3' exonuclease domain in the interval 160–249; that stretch reads VTPEQLADYW…LDGNLQQLRL (90 aa). K(+) is bound by residues Leu-171, Ala-172, Pro-180, Val-182, and Ile-185. The segment at 184–189 is interaction with DNA; that stretch reads GIGPKS.

Belongs to the Xni family. Mg(2+) is required as a cofactor. It depends on K(+) as a cofactor.

Functionally, has flap endonuclease activity. During DNA replication, flap endonucleases cleave the 5'-overhanging flap structure that is generated by displacement synthesis when DNA polymerase encounters the 5'-end of a downstream Okazaki fragment. This chain is Flap endonuclease Xni, found in Klebsiella pneumoniae subsp. pneumoniae (strain ATCC 700721 / MGH 78578).